Consider the following 439-residue polypeptide: Ribosomal protein uS12 methylthiotransferase RimO (439 aa).

The region spanning 1–117 (MNIGFISLGC…IAGVVNRIAQ (117 aa)) is the MTTase N-terminal domain. The [4Fe-4S] cluster site is built by C10, C46, C80, C154, C158, and C161. The region spanning 140–370 (TTPPGSAYLK…LRLQQKITRQ (231 aa)) is the Radical SAM core domain. The 67-residue stretch at 373 to 439 (LARINTQEKV…RNYDMIGEYQ (67 aa)) folds into the TRAM domain.

Belongs to the methylthiotransferase family. RimO subfamily. The cofactor is [4Fe-4S] cluster.

The protein resides in the cytoplasm. It catalyses the reaction L-aspartate(89)-[ribosomal protein uS12]-hydrogen + (sulfur carrier)-SH + AH2 + 2 S-adenosyl-L-methionine = 3-methylsulfanyl-L-aspartate(89)-[ribosomal protein uS12]-hydrogen + (sulfur carrier)-H + 5'-deoxyadenosine + L-methionine + A + S-adenosyl-L-homocysteine + 2 H(+). Its function is as follows. Catalyzes the methylthiolation of an aspartic acid residue of ribosomal protein uS12. The polypeptide is Ribosomal protein uS12 methylthiotransferase RimO (Syntrophomonas wolfei subsp. wolfei (strain DSM 2245B / Goettingen)).